The chain runs to 166 residues: Crossover junction endodeoxyribonuclease RuvC (166 aa).

Active-site residues include D7, E70, and H143. Residues D7, E70, and H143 each coordinate Mg(2+).

It belongs to the RuvC family. As to quaternary structure, homodimer which binds Holliday junction (HJ) DNA. The HJ becomes 2-fold symmetrical on binding to RuvC with unstacked arms; it has a different conformation from HJ DNA in complex with RuvA. In the full resolvosome a probable DNA-RuvA(4)-RuvB(12)-RuvC(2) complex forms which resolves the HJ. The cofactor is Mg(2+).

It is found in the cytoplasm. It catalyses the reaction Endonucleolytic cleavage at a junction such as a reciprocal single-stranded crossover between two homologous DNA duplexes (Holliday junction).. In terms of biological role, the RuvA-RuvB-RuvC complex processes Holliday junction (HJ) DNA during genetic recombination and DNA repair. Endonuclease that resolves HJ intermediates. Cleaves cruciform DNA by making single-stranded nicks across the HJ at symmetrical positions within the homologous arms, yielding a 5'-phosphate and a 3'-hydroxyl group; requires a central core of homology in the junction. The consensus cleavage sequence is 5'-(A/T)TT(C/G)-3'. Cleavage occurs on the 3'-side of the TT dinucleotide at the point of strand exchange. HJ branch migration catalyzed by RuvA-RuvB allows RuvC to scan DNA until it finds its consensus sequence, where it cleaves and resolves the cruciform DNA. In Thermus thermophilus (strain ATCC BAA-163 / DSM 7039 / HB27), this protein is Crossover junction endodeoxyribonuclease RuvC.